Reading from the N-terminus, the 257-residue chain is Gasdermin-like protein rcd-1-1 (257 aa).

This sequence belongs to the gasdermin family. In terms of assembly, heterooligomer; the heterooligomer with rcd-1-2 forms a ring-shaped pore complex when inserted in the membrane.

The protein resides in the cytoplasm. It is found in the cell membrane. Its function is as follows. Gasdermin-like protein involved in heterokaryon incompatibility, a process that ensures that during spontaneous vegetative cell fusion, only compatible cells from the same colony survive (non-self-recognition). In N.crassa, the rcd-1 locus exists as 2 incompatible alleles, rcd-1-1 (this entry) and rcd-1-2 (AC P0DW10). During the allorecognition process, forms a heterooligomer with rcd-1-2, thereby forming a functional gasdermin-like complex that binds to membranes and forms pores, triggering cell death. Binds negatively charged phospholipids, such as cardiolipin and phosphatidylserine. Also binds to phosphoinositides, preferentially to phosphatidylinositol-3-phosphate (PtdIns-3-P), PtdIns-5-P and PtdIns-3,5-P2. In Neurospora crassa (strain ATCC 24698 / 74-OR23-1A / CBS 708.71 / DSM 1257 / FGSC 987), this protein is Gasdermin-like protein rcd-1-1.